The chain runs to 77 residues: Putative defensin-like protein 129 (77 aa).

The signal sequence occupies residues 1-25 (MTKNTALTIFMVVLVIEMVMEETQG). 4 disulfide bridges follow: Cys28-Cys77, Cys37-Cys59, Cys42-Cys71, and Cys46-Cys73.

Belongs to the DEFL family.

It localises to the secreted. This Arabidopsis thaliana (Mouse-ear cress) protein is Putative defensin-like protein 129 (LCR13).